Consider the following 241-residue polypeptide: Large ribosomal subunit protein uL3 (241 aa).

Disordered regions lie at residues Val-139 to Gly-164 and Asp-215 to Val-241. Gln-151 is modified (N5-methylglutamine). Residues Ala-225–Val-241 show a composition bias toward low complexity.

The protein belongs to the universal ribosomal protein uL3 family. In terms of assembly, part of the 50S ribosomal subunit. Forms a cluster with proteins L14 and L19. Post-translationally, methylated by PrmB.

Functionally, one of the primary rRNA binding proteins, it binds directly near the 3'-end of the 23S rRNA, where it nucleates assembly of the 50S subunit. In Rhodopseudomonas palustris (strain HaA2), this protein is Large ribosomal subunit protein uL3.